The chain runs to 434 residues: T-box transcription factor T homolog (434 aa).

Residues 50–220 (LWKKFHKLTN…YNPFAKAFLD (171 aa)) constitute a DNA-binding region (T-box). Polar residues-rich tracts occupy residues 355 to 364 (SGFSHVSSPQ) and 376 to 385 (HPTSSHQHNL). The tract at residues 355–385 (SGFSHVSSPQSPLPTGLFRNPHPTSSHQHNL) is disordered.

As to expression, in the developing embryo, expressed in the mesenchyme founder cells, vegetal plate of the mesenchyme blastula, extending tip of the invaginating archenteron and, later, in the secondary mesenchyme cells.

It localises to the nucleus. Involved in the transcriptional regulation of genes required for mesoderm differentiation. This chain is T-box transcription factor T homolog, found in Hemicentrotus pulcherrimus (Sea urchin).